The chain runs to 208 residues: Thymidylate kinase (208 aa).

11–18 (GGEGVGKS) contributes to the ATP binding site.

Belongs to the thymidylate kinase family.

It carries out the reaction dTMP + ATP = dTDP + ADP. Its function is as follows. Phosphorylation of dTMP to form dTDP in both de novo and salvage pathways of dTTP synthesis. The sequence is that of Thymidylate kinase from Methylococcus capsulatus (strain ATCC 33009 / NCIMB 11132 / Bath).